The chain runs to 441 residues: UDP-N-acetylmuramoylalanine--D-glutamate ligase (441 aa).

An ATP-binding site is contributed by 129–135 (GTNGKST).

This sequence belongs to the MurCDEF family.

The protein localises to the cytoplasm. The enzyme catalyses UDP-N-acetyl-alpha-D-muramoyl-L-alanine + D-glutamate + ATP = UDP-N-acetyl-alpha-D-muramoyl-L-alanyl-D-glutamate + ADP + phosphate + H(+). The protein operates within cell wall biogenesis; peptidoglycan biosynthesis. Its function is as follows. Cell wall formation. Catalyzes the addition of glutamate to the nucleotide precursor UDP-N-acetylmuramoyl-L-alanine (UMA). This chain is UDP-N-acetylmuramoylalanine--D-glutamate ligase, found in Zymomonas mobilis subsp. mobilis (strain ATCC 31821 / ZM4 / CP4).